A 299-amino-acid chain; its full sequence is MIPYATIEEASIALSRNLTWLETLWFDYSATKSDYYLYCHNILFLFLIFSLVPLPLVFIESSQSTSDLFNRYKIQPKVKNSFSSMFKCYKDVMKMFILVVGPLQLVSYPSIQMIEIRSGLPLPSCMEIVAQLVVYFLVEDYTNYWVHRFFHCKWGYEKFHHIHHEYTAPIGYAAPYAHWAEVLLLGIPTFLGPAIAPGHMITFWLWIALRQIEAIETHSGYDFPWSLTKYIPFYGGAEYHDYHHYVGGQSQSNFASVFTYCDYIYGTDKGYRFQKKLLQQMKEKSKKSNKLVNGGEKFD.

The next 3 membrane-spanning stretches (helical) occupy residues 39–59 (CHNI…LVFI), 96–116 (FILV…MIEI), and 118–138 (SGLP…YFLV). The region spanning 132–267 (LVVYFLVEDY…FTYCDYIYGT (136 aa)) is the Fatty acid hydroxylase domain. The Histidine box-1 motif lies at 147–151 (HRFFH). Positions 160–164 (HHIHH) match the Histidine box-2 motif. The helical transmembrane segment at 189 to 209 (TFLGPAIAPGHMITFWLWIAL) threads the bilayer. Positions 239–245 (YHDYHHY) match the Histidine box-3 motif.

It belongs to the sterol desaturase family. As to quaternary structure, interacts with ACBP1. It depends on Fe cation as a cofactor. Expressed in embryo sacs, pollen and trichomes. Observed in leaves, roots, siliques and flowers.

Its subcellular location is the endoplasmic reticulum membrane. The catalysed reaction is 4,4-dimethyl-5alpha-cholest-7-en-3beta-ol + 6 Fe(II)-[cytochrome b5] + 3 O2 + 5 H(+) = 4alpha-carboxy-4beta-methyl-5alpha-cholest-7-ene-3beta-ol + 6 Fe(III)-[cytochrome b5] + 4 H2O. The enzyme catalyses 24-methylenecycloartanol + 6 Fe(II)-[cytochrome b5] + 3 O2 + 5 H(+) = 4alpha-carboxy-4beta,14alpha-dimethyl-9beta,19-cyclo-5alpha-ergost-24(24(1))-en-3beta-ol + 6 Fe(III)-[cytochrome b5] + 4 H2O. Non-heme iron oxygenase involved in sterols biosynthesis by catalyzing the removal of the first methyl group at the C-4 position. 4,4-dimethyl-9-beta,19-cyclopropylsterols such as 24-methylenecycloartanol are the preferred substrates. Acts as a rate-limiting enzyme in the sterol pathway via interaction with ACBP1; sterols serve as lipid modulators for gene expression of homeodomain-leucine zipper IV transcription factors. Together with SMO1-1, involved in the maintenance of sterol composition to balance auxin and cytokinin activities during embryogenesis. This chain is Methylsterol monooxygenase 1-2, found in Arabidopsis thaliana (Mouse-ear cress).